The sequence spans 306 residues: Proteasome subunit beta (306 aa).

A propeptide spans 1–67 (removed in mature form; by autocatalysis); the sequence is MTWPNRDQPA…GLPTDAVPHG (67 aa). The active-site Nucleophile is the Thr-68.

This sequence belongs to the peptidase T1B family. The 20S proteasome core is composed of 14 alpha and 14 beta subunits that assemble into four stacked heptameric rings, resulting in a barrel-shaped structure. The two inner rings, each composed of seven catalytic beta subunits, are sandwiched by two outer rings, each composed of seven alpha subunits. The catalytic chamber with the active sites is on the inside of the barrel. Has a gated structure, the ends of the cylinder being occluded by the N-termini of the alpha-subunits. Is capped by the proteasome-associated ATPase, ARC.

It is found in the cytoplasm. The catalysed reaction is Cleavage of peptide bonds with very broad specificity.. Its pathway is protein degradation; proteasomal Pup-dependent pathway. Its activity is regulated as follows. The formation of the proteasomal ATPase ARC-20S proteasome complex, likely via the docking of the C-termini of ARC into the intersubunit pockets in the alpha-rings, may trigger opening of the gate for substrate entry. Interconversion between the open-gate and close-gate conformations leads to a dynamic regulation of the 20S proteasome proteolysis activity. In terms of biological role, component of the proteasome core, a large protease complex with broad specificity involved in protein degradation. The chain is Proteasome subunit beta from Mycolicibacterium vanbaalenii (strain DSM 7251 / JCM 13017 / BCRC 16820 / KCTC 9966 / NRRL B-24157 / PYR-1) (Mycobacterium vanbaalenii).